A 442-amino-acid polypeptide reads, in one-letter code: MTSIKEQAAISRLLSFLQDWDNAGKVARSNILNNFIEANQGKTAPELEQEFSQGASLFLVRLTTWLRLTYMTGSPLDKLLRSIGVFLSAVSSNRYLIEFLEVGGVLTLLEILALNKIKEEDKKESIKLLQVIANSGRKYKELICESYGVRSIAEFLAKSKSEETQEEVQVLLDSLIHGNPKYQNQVYKGLIALLPCASPKAQQLALQTLRTAQSIIGTTHPSIVDCVLKVLCTMHLEVQYEAIELIKDLVNYDVCPALLKGLVALLIPSFKETSKLQSQIVSDSSVLELTAHLPLFLQQAAAAKAIGVLARHNTTLAEEMLHLRVIHSLMAAMGNTDHSNSQRQASLTLEYFVQLFPVVEEHVRKTMGEELYKLFLSNAENLYMNIDSIQADILAANKVNVTRVLHLSGLSYSNMSFYFGHPNEDQVAYVTHFRKEDVEEKE.

This chain is Armadillo-like helical domain containing protein 1, found in Bos taurus (Bovine).